A 167-amino-acid chain; its full sequence is 16S rRNA aminocarboxypropyltransferase (167 aa).

Positions 17, 62, 84, 99, and 103 each coordinate S-adenosyl-L-methionine.

This sequence belongs to the TDD superfamily. TSR3 family.

The protein localises to the cytoplasm. The catalysed reaction is an N(1)-methylpseudouridine in rRNA + S-adenosyl-L-methionine = N(1)-methyl-N(3)-[(3S)-3-amino-3-carboxypropyl]pseudouridine in rRNA + S-methyl-5'-thioadenosine + H(+). In terms of biological role, aminocarboxypropyltransferase that catalyzes the aminocarboxypropyl transfer on pseudouridine corresponding to position 914 in M.jannaschii 16S rRNA. It constitutes the last step in biosynthesis of the hypermodified N1-methyl-N3-(3-amino-3-carboxypropyl) pseudouridine (m1acp3-Psi). This Sulfurisphaera tokodaii (strain DSM 16993 / JCM 10545 / NBRC 100140 / 7) (Sulfolobus tokodaii) protein is 16S rRNA aminocarboxypropyltransferase.